A 172-amino-acid chain; its full sequence is WW domain binding protein VOPP1 (172 aa).

The N-terminal stretch at 1 to 22 (MGRRLGRVAALLLGLLVECTEA) is a signal peptide. Residues 23 to 60 (KKHCWYFEGLYPTYYICRSYEDCCGSRCCVRALSIQRL) lie on the Extracellular side of the membrane. A helical membrane pass occupies residues 61 to 81 (WYFWFLLMMGVLFCCGAGFFI). Topologically, residues 82–172 (RRRMYPPPLI…PPYEQVVKDK (91 aa)) are cytoplasmic. Residues 139 to 172 (QVQPNSPHGGTTYPPPPSYCNTPPPPYEQVVKDK) are disordered. Pro residues predominate over residues 151 to 165 (YPPPPSYCNTPPPPY).

The protein belongs to the VOPP1/ECOP family. In terms of assembly, interacts with WWOX (via WW domain).

It localises to the cytoplasmic vesicle membrane. Its subcellular location is the late endosome membrane. It is found in the lysosome membrane. Its function is as follows. Increases the transcriptional activity of NFKB1 by facilitating its nuclear translocation, DNA-binding and associated apoptotic response, when overexpressed. May sequester WWOX in lysosomal vesicles and thereby regulate WWOX role as tumor suppressor. The sequence is that of WW domain binding protein VOPP1 (Vopp1) from Mus musculus (Mouse).